The following is a 593-amino-acid chain: UvrABC system protein C (593 aa).

In terms of domain architecture, GIY-YIG spans 17 to 94 (MEPGCYLMKD…IKQYQPRYNI (78 aa)). The UVR domain maps to 199 to 234 (KTILKSLEERMLTASESLDFERAKEYRDLIQHIQNL).

It belongs to the UvrC family. In terms of assembly, interacts with UvrB in an incision complex.

It is found in the cytoplasm. Functionally, the UvrABC repair system catalyzes the recognition and processing of DNA lesions. UvrC both incises the 5' and 3' sides of the lesion. The N-terminal half is responsible for the 3' incision and the C-terminal half is responsible for the 5' incision. This chain is UvrABC system protein C, found in Staphylococcus aureus (strain MSSA476).